Consider the following 422-residue polypeptide: RNA exonuclease 4 (422 aa).

Residues 1–194 (MGKAKVPASK…APAPPTEEDI (194 aa)) are disordered. A Phosphoserine modification is found at serine 15. The span at 26–40 (LTRKKNKKKKRFWKS) shows a compositional bias: basic residues. A phosphoserine mark is found at serine 96 and serine 111. Composition is skewed to basic and acidic residues over residues 106–127 (NKKE…DQEA) and 151–176 (GTEH…DIEH). Lysine 115 participates in a covalent cross-link: Glycyl lysine isopeptide (Lys-Gly) (interchain with G-Cter in SUMO2). The region spanning 243 to 394 (ALALDCEMVG…QDAQAAMRLY (152 aa)) is the Exonuclease domain.

Belongs to the REXO4 family. In terms of assembly, can bind ESR1 and ESR2. This interaction is abrogated by estrogen and augmented by tamoxifen treatment.

The protein resides in the nucleus. It localises to the nucleolus. The sequence is that of RNA exonuclease 4 (REXO4) from Homo sapiens (Human).